The sequence spans 314 residues: tRNA dimethylallyltransferase (314 aa).

Position 13 to 20 (13 to 20 (GPTAVGKT)) interacts with ATP. 15-20 (TAVGKT) contacts substrate. Positions 38 to 41 (DSMQ) are interaction with substrate tRNA.

It belongs to the IPP transferase family. In terms of assembly, monomer. Requires Mg(2+) as cofactor.

It catalyses the reaction adenosine(37) in tRNA + dimethylallyl diphosphate = N(6)-dimethylallyladenosine(37) in tRNA + diphosphate. In terms of biological role, catalyzes the transfer of a dimethylallyl group onto the adenine at position 37 in tRNAs that read codons beginning with uridine, leading to the formation of N6-(dimethylallyl)adenosine (i(6)A). The protein is tRNA dimethylallyltransferase of Bacillus velezensis (strain DSM 23117 / BGSC 10A6 / LMG 26770 / FZB42) (Bacillus amyloliquefaciens subsp. plantarum).